Consider the following 151-residue polypeptide: UPF0208 membrane protein ESA_00924 (151 aa).

A run of 2 helical transmembrane segments spans residues 46–65 (FAIR…QIAL) and 69–91 (LGPA…WWLG).

Belongs to the UPF0208 family.

Its subcellular location is the cell inner membrane. This is UPF0208 membrane protein ESA_00924 from Cronobacter sakazakii (strain ATCC BAA-894) (Enterobacter sakazakii).